The sequence spans 183 residues: Dual-action ribosomal maturation protein DarP (183 aa).

Belongs to the DarP family.

It localises to the cytoplasm. Functionally, member of a network of 50S ribosomal subunit biogenesis factors which assembles along the 30S-50S interface, preventing incorrect 23S rRNA structures from forming. Promotes peptidyl transferase center (PTC) maturation. The chain is Dual-action ribosomal maturation protein DarP from Salmonella arizonae (strain ATCC BAA-731 / CDC346-86 / RSK2980).